The primary structure comprises 217 residues: Ribulose-phosphate 3-epimerase (217 aa).

S6 provides a ligand contact to substrate. A divalent metal cation is bound by residues H29, D31, and H62. D31 (proton acceptor) is an active-site residue. Residues H62, 138-141, 171-173, and 193-194 each bind substrate; these read GFGG, DGG, and GS. D171 serves as a coordination point for a divalent metal cation. D171 serves as the catalytic Proton donor.

This sequence belongs to the ribulose-phosphate 3-epimerase family. A divalent metal cation serves as cofactor.

It catalyses the reaction D-ribulose 5-phosphate = D-xylulose 5-phosphate. The protein operates within carbohydrate degradation. Catalyzes the reversible epimerization of D-ribulose 5-phosphate to D-xylulose 5-phosphate. This Helicobacter pylori (strain ATCC 700392 / 26695) (Campylobacter pylori) protein is Ribulose-phosphate 3-epimerase.